The chain runs to 96 residues: Acylphosphatase (96 aa).

Positions 9–96 constitute an Acylphosphatase-like domain; the sequence is CAEIYVSGRV…DTFTDFFIKR (88 aa). Catalysis depends on residues R24 and N42.

Belongs to the acylphosphatase family.

It carries out the reaction an acyl phosphate + H2O = a carboxylate + phosphate + H(+). The protein is Acylphosphatase (acyP) of Methanococcoides burtonii (strain DSM 6242 / NBRC 107633 / OCM 468 / ACE-M).